The following is a 494-amino-acid chain: Inositol-trisphosphate 3-kinase homolog (494 aa).

Residues S206, K218, 260–262 (EDL), and D276 contribute to the ATP site. Substrate-binding positions include K278 and 322–329 (KLRYMQFR). ATP contacts are provided by K346 and D426. K429 contacts substrate.

Belongs to the inositol phosphokinase (IPK) family. As to expression, expressed in spermatheca.

The catalysed reaction is 1D-myo-inositol 1,4,5-trisphosphate + ATP = 1D-myo-inositol 1,3,4,5-tetrakisphosphate + ADP + H(+). Unlike mammalian IP3K, may not be regulated by calmodulin. Its function is as follows. Probably by regulating inositol 1,4,5-trisphosphate levels, negatively regulates posterior body wall muscle contractions required for defecation and let-23 signaling pathway that controls spermathecal dilation and ovulation. May also regulate ovulation downstream of actin cross-linker fln-1. This is Inositol-trisphosphate 3-kinase homolog from Caenorhabditis elegans.